Here is a 101-residue protein sequence, read N- to C-terminus: MVAKLTEQERVEKLQPLLDAGWCLVEGRDAIYKEFLFKDFNQAFSFMTGVALLAEKMNHHPEWFNVYNKLQVTLSTHDVGGLSSQDIRMATYLETQAKLLH.

It belongs to the pterin-4-alpha-carbinolamine dehydratase family.

It carries out the reaction (4aS,6R)-4a-hydroxy-L-erythro-5,6,7,8-tetrahydrobiopterin = (6R)-L-erythro-6,7-dihydrobiopterin + H2O. The sequence is that of Pterin-4-alpha-carbinolamine dehydratase (Pcd) from Drosophila virilis (Fruit fly).